Reading from the N-terminus, the 314-residue chain is MASSDETIFDLPPYIRSRKTPFFPLCFPSLNDPETGVSWKDVPISSQVSVRIYLPKITDHEKGEKLPILVYVHGAGFCLESAFKSFFHTYVKHFVTEAKAIVVSVEFRLAPEHHLPSAYEDCWEALQWVASHVGLDTSSLKTSIDKDPWIINYGDFERLYLWGDSTGANIVHNILIRAGKEKLKGGVKILGAILYYPYFLIRTSSKQSDYMENEYRSYWKLAYPNAPGGNDNLMINPTAENGPDLRGYGCSRLLVSMVADEARDITLLYIDALERSGWKGELDVADFEGDYFEIFSPDTELGKNKLRRSTSFIR.

An Involved in the stabilization of the negatively charged intermediate by the formation of the oxyanion hole motif is present at residues 73–75 (HGA). Active-site residues include Ser-165 and Asp-260.

It belongs to the 'GDXG' lipolytic enzyme family.

The protein operates within alkaloid biosynthesis. Its function is as follows. Component of the seco-iridoid and derivatives monoterpenoid indole alkaloids (MIAs, e.g. vincadifformine) biosynthesis pathway. Catalyzes the conversion of O-acetylstemmadenine (OAS) to vincadifformine. May also trigger the formation of additional unknown MIAs. This is Hydrolase 4 from Catharanthus roseus (Madagascar periwinkle).